A 233-amino-acid polypeptide reads, in one-letter code: Archaetidylserine synthase (233 aa).

The next 8 helical transmembrane spans lie at 7 to 27 (ITSFIALPDLLSMLNASSGYL), 29 to 49 (ILLSIDGSLNAACILMLLAVL), 75 to 95 (SLSDVISFGVAPAILIYSAAV), 102 to 122 (ILVGPLIVLCGILRLSRFNVL), 126 to 146 (GKNFTGLPIPVAAVTISSFYL), 147 to 167 (TGFYSELSAAFIMIAVSVLMI), 180 to 200 (ASTALILIIATIISVAAVEIL), and 206 to 226 (VAGPVAIILFIATLTYIAVPI).

The protein belongs to the CDP-alcohol phosphatidyltransferase class-I family.

The protein resides in the membrane. The catalysed reaction is CDP-2,3-bis-O-(geranylgeranyl)-sn-glycerol + L-serine = archaetidylserine + CMP + H(+). It catalyses the reaction CDP-2,3-bis-O-(phytanyl)-sn-glycerol + L-serine = 2,3-bis-O-phytanyl-sn-glycero-3-phospho-L-serine + CMP + H(+). It participates in membrane lipid metabolism; glycerophospholipid metabolism. With respect to regulation, activated by Mn(2+) ions. Its function is as follows. Involved in the lipid biosynthesis. Catalyzes the formation of unsaturated archaetidylserine from CDP-unsaturated archaeol and L-serine. Activity with ester-linked substrate analogs containing straight aliphatic chains (typical bacterial substrates) is two to three times higher than that with the corresponding ether-type substrate (typical archaeal substrates). Both enantiomers of CDP-unsaturated archaeols with ether-linked geranylgeranyl chains and CDP-saturated archaeol with ether-linked phytanyl chains are similarly active. The enzyme also accepts D-serine, although activity is only about third of that with L-serine. This Methanothermobacter thermautotrophicus (strain ATCC 29096 / DSM 1053 / JCM 10044 / NBRC 100330 / Delta H) (Methanobacterium thermoautotrophicum) protein is Archaetidylserine synthase.